Reading from the N-terminus, the 142-residue chain is Large ribosomal subunit protein bL17 (142 aa).

This sequence belongs to the bacterial ribosomal protein bL17 family. As to quaternary structure, part of the 50S ribosomal subunit. Contacts protein L32.

The polypeptide is Large ribosomal subunit protein bL17 (Brucella canis (strain ATCC 23365 / NCTC 10854 / RM-666)).